The primary structure comprises 199 residues: VAMP-like protein YKT62 (199 aa).

In terms of domain architecture, Longin spans 7–131; sequence LVLKCDPETR…PYLKEASDKF (125 aa). A v-SNARE coiled-coil homology domain is found at 139 to 199; sequence KLLKIQRELD…KKTNSCCTLL (61 aa). Cys195 is lipidated: S-palmitoyl cysteine. Cysteine methyl ester is present on Cys196. Cys196 carries the S-geranylgeranyl cysteine lipid modification. A propeptide spans 197-199 (removed in mature form); that stretch reads TLL.

It belongs to the synaptobrevin family. Interacts with SYP41. Core constituent of the SNARE complex required for membrane fusion at the trans-Golgi network.

It is found in the cell membrane. In terms of biological role, involved in the secretory pathway. Essential for membrane fusion mediated by either SYP41 or SYP61; triggers the fusion of phospholipid vesicles containing SYP41 or SYP61 and VTI12. The chain is VAMP-like protein YKT62 from Arabidopsis thaliana (Mouse-ear cress).